Here is a 189-residue protein sequence, read N- to C-terminus: Phosphoheptose isomerase (189 aa).

Residues 34–189 (LVAALKGGKK…CDLVEKGLFK (156 aa)) form the SIS domain. Residue 49 to 51 (NGG) participates in substrate binding. Residues His58 and Glu62 each contribute to the Zn(2+) site. Residues Glu62, 91-92 (ND), 117-119 (STS), Ser122, and Gln169 contribute to the substrate site. 2 residues coordinate Zn(2+): Gln169 and His177.

The protein belongs to the SIS family. GmhA subfamily. As to quaternary structure, homotetramer. Requires Zn(2+) as cofactor.

The protein resides in the cytoplasm. The catalysed reaction is 2 D-sedoheptulose 7-phosphate = D-glycero-alpha-D-manno-heptose 7-phosphate + D-glycero-beta-D-manno-heptose 7-phosphate. Its pathway is carbohydrate biosynthesis; D-glycero-D-manno-heptose 7-phosphate biosynthesis; D-glycero-alpha-D-manno-heptose 7-phosphate and D-glycero-beta-D-manno-heptose 7-phosphate from sedoheptulose 7-phosphate: step 1/1. Its function is as follows. Catalyzes the isomerization of sedoheptulose 7-phosphate in D-glycero-D-manno-heptose 7-phosphate. The protein is Phosphoheptose isomerase of Geobacter metallireducens (strain ATCC 53774 / DSM 7210 / GS-15).